The primary structure comprises 248 residues: ATP synthase subunit a, chloroplastic (248 aa).

5 consecutive transmembrane segments (helical) span residues 37–57 (AQVL…AFVT), 96–116 (VPFI…GALF), 135–155 (INTT…AGLH), 200–220 (LVVA…MMFL), and 221–241 (GLFT…AYIG).

Belongs to the ATPase A chain family. In terms of assembly, F-type ATPases have 2 components, CF(1) - the catalytic core - and CF(0) - the membrane proton channel. CF(1) has five subunits: alpha(3), beta(3), gamma(1), delta(1), epsilon(1). CF(0) has four main subunits: a, b, b' and c.

Its subcellular location is the plastid. It localises to the chloroplast thylakoid membrane. In terms of biological role, key component of the proton channel; it plays a direct role in the translocation of protons across the membrane. In Psilotum nudum (Whisk fern), this protein is ATP synthase subunit a, chloroplastic.